The sequence spans 415 residues: Probable carboxypeptidase ACLA_013260 (415 aa).

An N-terminal signal peptide occupies residues 1–17 (MKFPWLLLVKGAASVAA). N-linked (GlcNAc...) asparagine glycosylation is present at asparagine 97. A Zn(2+)-binding site is contributed by aspartate 145. The active-site Proton acceptor is the glutamate 177. Glutamate 178 lines the Zn(2+) pocket. Asparagine 271 carries N-linked (GlcNAc...) asparagine glycosylation.

It belongs to the peptidase M20A family. The cofactor is Zn(2+).

It is found in the secreted. The protein is Probable carboxypeptidase ACLA_013260 of Aspergillus clavatus (strain ATCC 1007 / CBS 513.65 / DSM 816 / NCTC 3887 / NRRL 1 / QM 1276 / 107).